The following is a 75-amino-acid chain: Small ribosomal subunit protein bS18 (75 aa).

Belongs to the bacterial ribosomal protein bS18 family. Part of the 30S ribosomal subunit. Forms a tight heterodimer with protein bS6.

Binds as a heterodimer with protein bS6 to the central domain of the 16S rRNA, where it helps stabilize the platform of the 30S subunit. The sequence is that of Small ribosomal subunit protein bS18 from Buchnera aphidicola subsp. Baizongia pistaciae (strain Bp).